The chain runs to 360 residues: Phospho-N-acetylmuramoyl-pentapeptide-transferase (360 aa).

10 consecutive transmembrane segments (helical) span residues 26-46 (AILGLMTALMFSLWWGPKMIA), 73-93 (TMGGLLILAGVFISVLLWGDL), 97-117 (YVWVVLFVLGSFGLIGFIDDY), 132-152 (WKYLLQSLAALLIAVYLYASA), 168-188 (VMPQLGGFFIVLVYFTIVGSS), 199-219 (GLAIMPTVMVAAAFALIAYLS), 236-256 (AGELVIVCTAIVGAGLGFLWF), 263-283 (VFMGDVGSLSLGAALGTIAVL), 288-308 (ILLVIMGGVFVMETVSVILQV), and 338-358 (VIVRFWIISLFLVLLGLATLK).

The protein belongs to the glycosyltransferase 4 family. MraY subfamily. The cofactor is Mg(2+).

The protein resides in the cell inner membrane. The catalysed reaction is UDP-N-acetyl-alpha-D-muramoyl-L-alanyl-gamma-D-glutamyl-meso-2,6-diaminopimeloyl-D-alanyl-D-alanine + di-trans,octa-cis-undecaprenyl phosphate = di-trans,octa-cis-undecaprenyl diphospho-N-acetyl-alpha-D-muramoyl-L-alanyl-D-glutamyl-meso-2,6-diaminopimeloyl-D-alanyl-D-alanine + UMP. Its pathway is cell wall biogenesis; peptidoglycan biosynthesis. Functionally, catalyzes the initial step of the lipid cycle reactions in the biosynthesis of the cell wall peptidoglycan: transfers peptidoglycan precursor phospho-MurNAc-pentapeptide from UDP-MurNAc-pentapeptide onto the lipid carrier undecaprenyl phosphate, yielding undecaprenyl-pyrophosphoryl-MurNAc-pentapeptide, known as lipid I. The sequence is that of Phospho-N-acetylmuramoyl-pentapeptide-transferase from Shewanella halifaxensis (strain HAW-EB4).